A 231-amino-acid chain; its full sequence is Large ribosomal subunit protein uL1 (231 aa).

The protein belongs to the universal ribosomal protein uL1 family. Part of the 50S ribosomal subunit.

Its function is as follows. Binds directly to 23S rRNA. The L1 stalk is quite mobile in the ribosome, and is involved in E site tRNA release. In terms of biological role, protein L1 is also a translational repressor protein, it controls the translation of the L11 operon by binding to its mRNA. This is Large ribosomal subunit protein uL1 from Chromobacterium violaceum (strain ATCC 12472 / DSM 30191 / JCM 1249 / CCUG 213 / NBRC 12614 / NCIMB 9131 / NCTC 9757 / MK).